A 531-amino-acid polypeptide reads, in one-letter code: Probable inactive beta-glucosidase 25 (531 aa).

The first 24 residues, 1–24, serve as a signal peptide directing secretion; that stretch reads MALKAILFLGLFLVVIVSPITVYG. A beta-D-glucoside is bound by residues Gln53 and 202–203; that span reads NE. The active-site Proton donor is Glu203. An intrachain disulfide couples Cys222 to Cys230. A beta-D-glucoside contacts are provided by residues Phe348 and 477–478; that span reads EW.

Belongs to the glycosyl hydrolase 1 family.

The protein is Probable inactive beta-glucosidase 25 of Arabidopsis thaliana (Mouse-ear cress).